A 308-amino-acid chain; its full sequence is Coenzyme PQQ synthesis protein B (308 aa).

It belongs to the PqqB family.

It participates in cofactor biosynthesis; pyrroloquinoline quinone biosynthesis. In terms of biological role, may be involved in the transport of PQQ or its precursor to the periplasm. This is Coenzyme PQQ synthesis protein B from Rhodopseudomonas palustris (strain BisB5).